A 394-amino-acid polypeptide reads, in one-letter code: Quinolinate synthase (394 aa).

The iminosuccinate site is built by histidine 57 and serine 74. Position 121 (cysteine 121) interacts with [4Fe-4S] cluster. Iminosuccinate contacts are provided by residues 153-155 (YMN) and serine 174. Cysteine 243 serves as a coordination point for [4Fe-4S] cluster. Iminosuccinate contacts are provided by residues 269-271 (HPE) and threonine 286. A [4Fe-4S] cluster-binding site is contributed by cysteine 333.

The protein belongs to the quinolinate synthase family. Type 3 subfamily. The cofactor is [4Fe-4S] cluster.

Its subcellular location is the cytoplasm. The catalysed reaction is iminosuccinate + dihydroxyacetone phosphate = quinolinate + phosphate + 2 H2O + H(+). Its pathway is cofactor biosynthesis; NAD(+) biosynthesis; quinolinate from iminoaspartate: step 1/1. Catalyzes the condensation of iminoaspartate with dihydroxyacetone phosphate to form quinolinate. This Corynebacterium glutamicum (strain ATCC 13032 / DSM 20300 / JCM 1318 / BCRC 11384 / CCUG 27702 / LMG 3730 / NBRC 12168 / NCIMB 10025 / NRRL B-2784 / 534) protein is Quinolinate synthase.